A 427-amino-acid polypeptide reads, in one-letter code: 3-phosphoshikimate 1-carboxyvinyltransferase (427 aa).

Residues Lys22, Ser23, and Arg27 each coordinate 3-phosphoshikimate. Lys22 contacts phosphoenolpyruvate. Residues Gly96 and Arg124 each contribute to the phosphoenolpyruvate site. Ser169, Ser170, Gln171, Ser197, Asp313, Asn336, and Lys340 together coordinate 3-phosphoshikimate. Residue Gln171 coordinates phosphoenolpyruvate. Catalysis depends on Asp313, which acts as the Proton acceptor. Phosphoenolpyruvate contacts are provided by Arg344, Arg386, and Lys411.

This sequence belongs to the EPSP synthase family. In terms of assembly, monomer.

The protein resides in the cytoplasm. It carries out the reaction 3-phosphoshikimate + phosphoenolpyruvate = 5-O-(1-carboxyvinyl)-3-phosphoshikimate + phosphate. It participates in metabolic intermediate biosynthesis; chorismate biosynthesis; chorismate from D-erythrose 4-phosphate and phosphoenolpyruvate: step 6/7. In terms of biological role, catalyzes the transfer of the enolpyruvyl moiety of phosphoenolpyruvate (PEP) to the 5-hydroxyl of shikimate-3-phosphate (S3P) to produce enolpyruvyl shikimate-3-phosphate and inorganic phosphate. The polypeptide is 3-phosphoshikimate 1-carboxyvinyltransferase (Salmonella agona (strain SL483)).